A 435-amino-acid chain; its full sequence is Trigger factor (435 aa).

Residues 183–263 (GDFINVDVTI…VKTIWQGNMP (81 aa)) form the PPIase FKBP-type domain.

This sequence belongs to the FKBP-type PPIase family. Tig subfamily.

The protein localises to the cytoplasm. The catalysed reaction is [protein]-peptidylproline (omega=180) = [protein]-peptidylproline (omega=0). Functionally, involved in protein export. Acts as a chaperone by maintaining the newly synthesized protein in an open conformation. Functions as a peptidyl-prolyl cis-trans isomerase. This is Trigger factor from Protochlamydia amoebophila (strain UWE25).